A 233-amino-acid chain; its full sequence is Defense protein 3 (233 aa).

A signal peptide spans 1 to 17 (MFGKFVLLAVLLVGVNS). The propeptide occupies 18–45 (RYVIIEDPVYYIEDHELPEQWTSSRVRR).

Belongs to the attacin/sarcotoxin-2 family.

The protein localises to the secreted. Functionally, has antibacterial activity against both Gram-positive and Gram-negative bacteria. This Lonomia obliqua (Moth) protein is Defense protein 3.